The chain runs to 501 residues: Probable malate:quinone oxidoreductase (501 aa).

It belongs to the MQO family. FAD serves as cofactor.

It carries out the reaction (S)-malate + a quinone = a quinol + oxaloacetate. It participates in carbohydrate metabolism; tricarboxylic acid cycle; oxaloacetate from (S)-malate (quinone route): step 1/1. This Paenarthrobacter aurescens (strain TC1) protein is Probable malate:quinone oxidoreductase.